Here is a 79-residue protein sequence, read N- to C-terminus: Small ribosomal subunit protein uS17 (79 aa).

The protein belongs to the universal ribosomal protein uS17 family. As to quaternary structure, part of the 30S ribosomal subunit.

In terms of biological role, one of the primary rRNA binding proteins, it binds specifically to the 5'-end of 16S ribosomal RNA. This is Small ribosomal subunit protein uS17 from Rhizobium etli (strain ATCC 51251 / DSM 11541 / JCM 21823 / NBRC 15573 / CFN 42).